The primary structure comprises 225 residues: uncharacterized protein (225 aa).

Residues 2-22 (TIFYLVFIAVIIIIILYVLYL) traverse the membrane as a helical segment. N-linked (GlcNAc...) asparagine; by host glycosylation is present at Asn-73. The stretch at 114–146 (DYEDNYFNSNWNLKQLKNQLENLLREKNYKMVL) forms a coiled coil. Asn-222 is a glycosylation site (N-linked (GlcNAc...) asparagine; by host).

It localises to the membrane. This is an uncharacterized protein from Acanthamoeba polyphaga (Amoeba).